Here is a 78-residue protein sequence, read N- to C-terminus: Probable [Fe-S]-dependent transcriptional repressor (78 aa).

4 residues coordinate iron-sulfur cluster: cysteine 56, cysteine 61, cysteine 64, and cysteine 70.

Belongs to the FeoC family.

Its function is as follows. May function as a transcriptional regulator that controls feoABC expression. This Citrobacter koseri (strain ATCC BAA-895 / CDC 4225-83 / SGSC4696) protein is Probable [Fe-S]-dependent transcriptional repressor.